The chain runs to 258 residues: MTTRTPLMAGNWKMNLNHLEAIAHVQKLAFALADKDYDAVEVAVLAPFTDLRSVQTLVDGDKLKIKYGAQDISAHDGGAYTGEISGPMLAKLKCTYVAVGHSERRQYHAETDEIVNAKVKAAYKHGLTPILCVGEELDVREAGNHVEHTLAQVEGGLKDLAAEQAESVVIAYEPVWAIGTGKVCGADDAQEVCAAIRGKLAELYSQELADKVRIQYGGSVKSGNVAEIMAKPDIDGALVGGASLDSDEFVKIVRFRDQ.

A substrate-binding site is contributed by 11–13; sequence NWK. Histidine 101 (electrophile) is an active-site residue. Glutamate 173 functions as the Proton acceptor in the catalytic mechanism. Residues glycine 179, serine 219, and 240-241 contribute to the substrate site; that span reads GG.

Belongs to the triosephosphate isomerase family. In terms of assembly, homodimer.

The protein localises to the cytoplasm. The enzyme catalyses D-glyceraldehyde 3-phosphate = dihydroxyacetone phosphate. Its pathway is carbohydrate biosynthesis; gluconeogenesis. The protein operates within carbohydrate degradation; glycolysis; D-glyceraldehyde 3-phosphate from glycerone phosphate: step 1/1. Its function is as follows. Involved in the gluconeogenesis. Catalyzes stereospecifically the conversion of dihydroxyacetone phosphate (DHAP) to D-glyceraldehyde-3-phosphate (G3P). The chain is Triosephosphate isomerase from Streptomyces coelicolor (strain ATCC BAA-471 / A3(2) / M145).